A 199-amino-acid polypeptide reads, in one-letter code: SCO2-like protein RC0042 (199 aa).

Belongs to the SCO1/2 family.

The protein is SCO2-like protein RC0042 of Rickettsia conorii (strain ATCC VR-613 / Malish 7).